A 300-amino-acid polypeptide reads, in one-letter code: Phosphoenolpyruvate phosphomutase (300 aa).

Residues 1 to 10 constitute a propeptide that is removed on maturation; the sequence is MLANSLKSFF. The active-site Nucleophile is Asp-66.

Belongs to the isocitrate lyase/PEP mutase superfamily. PEP mutase family.

The enzyme catalyses phosphoenolpyruvate + H(+) = 3-phosphonopyruvate. It functions in the pathway phosphorus metabolism; phosphonate biosynthesis. Its function is as follows. Formation of a carbon-phosphorus bond by converting phosphoenolpyruvate (PEP) to phosphonopyruvate (P-Pyr). This chain is Phosphoenolpyruvate phosphomutase (PEPM), found in Tetrahymena pyriformis.